We begin with the raw amino-acid sequence, 492 residues long: Diacylglycerol kinase 7 (492 aa).

The DAGKc domain maps to 90 to 248 (APHAPMVVFI…SWKIVVSMPS (159 aa)).

This sequence belongs to the eukaryotic diacylglycerol kinase family. In terms of assembly, monomer. In terms of tissue distribution, highly expressed in flowers, and at low levels in roots, stems and leaves.

It catalyses the reaction a 1,2-diacyl-sn-glycerol + ATP = a 1,2-diacyl-sn-glycero-3-phosphate + ADP + H(+). Phosphorylates the second messenger diacylglycerol (DAG) to generate phosphatidic acid (PA), another important signaling molecule. PA is required for plant development and responses to abiotic stress and pathogen attack. May be involved in the accumulation of PA during cold stress xhibits high specificity for 1,2-dioleoyl-sn-glycerol (1,2-DOG), 1-palmitoyl, 2-oleoyl-sn-glycerol (1,2 POG), 1-stearoyl, 2-linoleoyl-sn-glycerol (1,2-SLG) and 1-oleoyl, 2-palmitoyl-sn-glycerol (1,2-OPG). In Arabidopsis thaliana (Mouse-ear cress), this protein is Diacylglycerol kinase 7 (DGK7).